We begin with the raw amino-acid sequence, 516 residues long: D-alanine--D-alanyl carrier protein ligase (516 aa).

Residue 156–157 (TS) participates in ATP binding. Asp203 is a binding site for D-alanine. 298–303 (NAYGPT) is an ATP binding site. Val307 is a D-alanine binding site. Residues Asp389, 401-404 (YGGR), and Lys503 each bind ATP. Lys503 contributes to the D-alanine binding site.

This sequence belongs to the ATP-dependent AMP-binding enzyme family. DltA subfamily.

It is found in the cytoplasm. It catalyses the reaction holo-[D-alanyl-carrier protein] + D-alanine + ATP = D-alanyl-[D-alanyl-carrier protein] + AMP + diphosphate. It participates in cell wall biogenesis; lipoteichoic acid biosynthesis. Functionally, catalyzes the first step in the D-alanylation of lipoteichoic acid (LTA), the activation of D-alanine and its transfer onto the D-alanyl carrier protein (Dcp) DltC. In an ATP-dependent two-step reaction, forms a high energy D-alanyl-AMP intermediate, followed by transfer of the D-alanyl residue as a thiol ester to the phosphopantheinyl prosthetic group of the Dcp. D-alanylation of LTA plays an important role in modulating the properties of the cell wall in Gram-positive bacteria, influencing the net charge of the cell wall. In Streptococcus pneumoniae (strain 70585), this protein is D-alanine--D-alanyl carrier protein ligase.